A 704-amino-acid polypeptide reads, in one-letter code: SH3KBP1-binding protein 1 (704 aa).

The residue at position 2 (alanine 2) is an N-acetylalanine. Positions glutamate 19–glycine 88 constitute a BTB domain. The tract at residues valine 146 to proline 165 is disordered. Threonine 163 carries the post-translational modification Phosphothreonine. WD repeat units lie at residues arginine 233 to glutamate 280, valine 283 to glutamine 322, valine 324 to lysine 359, valine 428 to serine 466, and leucine 548 to glycine 586. The disordered stretch occupies residues proline 609–phenylalanine 704. Residues serine 612 to serine 631 are compositionally biased toward low complexity. Positions proline 618–arginine 623 match the PXXXPR motif. A phosphoserine mark is found at serine 644 and serine 646. The PXXXPR motif lies at proline 678–arginine 683. Position 693 is a phosphothreonine (threonine 693).

This sequence belongs to the KCTD3 family. Monomer. Interacts with CUL3; interaction is direct and forms a 5:5 heterodecamer. Interacts (via PXXXPR motifs) with SH3KBP1 (via SH3 domains). Directly interacts with cathepsin B/CTSB.

It is found in the lysosome. Functionally, inhibits CBL-SH3KBP1 complex mediated down-regulation of EGFR signaling by sequestration of SH3KBP1. Binds to SH3KBP1 and prevents its interaction with CBL and inhibits translocation of SH3KBP1 to EGFR containing vesicles upon EGF stimulation. This is SH3KBP1-binding protein 1 (Shkbp1) from Mus musculus (Mouse).